Consider the following 353-residue polypeptide: Aliphatic aldoxime dehydratase (353 aa).

Ser219 provides a ligand contact to an aliphatic aldoxime. His299 is a binding site for heme b. Residue His320 coordinates an aliphatic aldoxime. His320 is a catalytic residue.

Belongs to the heme-containing dehydratase family. In terms of assembly, homodimer. Heme b is required as a cofactor.

The catalysed reaction is an aliphatic aldoxime = a nitrile + H2O. Active when the heme iron is in the ferrous state. The activity is enhanced by reducing agents, such as Na(2)S, Na(2)S(2)(O4), 2-mercaptoethanol, and L-cysteine and supplementary additions of electron acceptors such as flavins, sulfite ion, and vitamin K3. The effect of various chemicals on the enzyme activity is different in the presence and absence of the reducing reagent, Na(2)S, which acts not only as a reductant but also changes the substrate specificity of the enzyme. In terms of biological role, catalyzes the dehydration of aldoximes to their corresponding nitrile. Is active toward various arylalkyl- and alkyl-aldoximes, and to a lesser extent toward aryl-aldoximes. The chain is Aliphatic aldoxime dehydratase from Rhodococcus erythropolis (Arthrobacter picolinophilus).